The primary structure comprises 378 residues: Putative glutamate--cysteine ligase 2 (378 aa).

Belongs to the glutamate--cysteine ligase type 2 family. YbdK subfamily.

The catalysed reaction is L-cysteine + L-glutamate + ATP = gamma-L-glutamyl-L-cysteine + ADP + phosphate + H(+). ATP-dependent carboxylate-amine ligase which exhibits weak glutamate--cysteine ligase activity. In Bdellovibrio bacteriovorus (strain ATCC 15356 / DSM 50701 / NCIMB 9529 / HD100), this protein is Putative glutamate--cysteine ligase 2.